The following is a 73-amino-acid chain: Large ribosomal subunit protein bL31 (73 aa).

The protein belongs to the bacterial ribosomal protein bL31 family. Type A subfamily. Part of the 50S ribosomal subunit.

Functionally, binds the 23S rRNA. This chain is Large ribosomal subunit protein bL31, found in Bartonella henselae (strain ATCC 49882 / DSM 28221 / CCUG 30454 / Houston 1) (Rochalimaea henselae).